The chain runs to 145 residues: Maximins 3/H9 type 1 (145 aa).

An N-terminal signal peptide occupies residues 1–18 (MNFKYIVAVSFLIASAYA). 2 consecutive propeptides follow at residues 19–43 (RSVQ…LREI) and 74–124 (RTAE…KEKR). Position 144 is an isoleucine amide (I144).

This sequence belongs to the bombinin family. Expressed by the skin glands.

It localises to the secreted. Functionally, maximin-3 shows antibacterial activity against both Gram-positive and Gram-negative bacteria. It also shows antimicrobial activity against the fungus C.albicans, but not against A.flavus nor P.uticale. It has little hemolytic activity. It possess a significant cytotoxicity against tumor cell lines. It possess a significant anti-HIV activity. It shows high spermicidal activity. Maximin-H9 shows antimicrobial activity against bacteria and against the fungus C.albicans. Shows strong hemolytic activity. This Bombina maxima (Giant fire-bellied toad) protein is Maximins 3/H9 type 1.